The following is a 347-amino-acid chain: GMP reductase (347 aa).

108-131 provides a ligand contact to NADP(+); that stretch reads ADFEKTKQILDLNPALNFVCIDVA. K(+) contacts are provided by Gly181 and Gly183. Cys186 functions as the Thioimidate intermediate in the catalytic mechanism. Position 216-239 (216-239) interacts with NADP(+); it reads IISDGGCTTPGDVAKAFGGGADFV.

This sequence belongs to the IMPDH/GMPR family. GuaC type 1 subfamily. In terms of assembly, homotetramer.

It carries out the reaction IMP + NH4(+) + NADP(+) = GMP + NADPH + 2 H(+). Its function is as follows. Catalyzes the irreversible NADPH-dependent deamination of GMP to IMP. It functions in the conversion of nucleobase, nucleoside and nucleotide derivatives of G to A nucleotides, and in maintaining the intracellular balance of A and G nucleotides. The polypeptide is GMP reductase (Escherichia coli O157:H7).